The chain runs to 622 residues: MHPEVSEQQADGATEPSLEESAGDHSGAGPGVRKEEINETKETCVGPSTTSCQSQKQQSGDSRLDCRSGYARNDRDDRGPRMTKEFLQKLCKQHKLYITPALNDTLYLHFKGFDRIENLEEYTGLRCLWLECNGIQRIENLQAQSELRCLFLQVNLLHKIENLEPLQKLDALNLSNNYIKTIENLSCLPVLNTLQMAHNRLETVADIQHLRECLRLCVLDLSHNMLSDPEILSVLESMPCLRVLNLMGNPVTKHIPNYRRTVTVRLKQLTYLDDRPVFPKDRACAEAWARGGYAAEKEERLQWESREHKKITDSLEALAMIKRRAEERKKARDKGETPLPDSEESSSTSPEAQDKPPLGETQQKIEVLVEESFKAKDELFPEKPGGEEELAVVADRTMEEPDLPGSLAQSQTPLVATAEESTSSVAATDGTGIEDTEAIALENKERLFIDDLPDLEDVDGMDISMEDQTKETGIPKIQVISSLSDDSDPELNDSPLPMLEHTPTGSTGVLSNIFAVCKDSSKAARVPLTDIYEPRATTAPETQGQVFSTTPPRPLIQELEEDGRGENESKQSLPAQSSEDGDSQLPEATLLGDRAENEAQSSLDLGKPSPRASLEDIEFGLD.

The segment covering 1 to 11 has biased composition (polar residues); that stretch reads MHPEVSEQQAD. The disordered stretch occupies residues 1-80; it reads MHPEVSEQQA…ARNDRDDRGP (80 aa). Over residues 32-42 the composition is skewed to basic and acidic residues; it reads VRKEEINETKE. Residues 48–59 show a composition bias toward low complexity; the sequence is STTSCQSQKQQS. Positions 62–80 are enriched in basic and acidic residues; it reads SRLDCRSGYARNDRDDRGP. LRR repeat units lie at residues 101–123, 124–145, 146–167, 168–189, 190–211, and 215–236; these read ALND…EEYT, GLRC…QAQS, ELRC…EPLQ, KLDA…SCLP, VLNT…QHLR, and RLCV…SVLE. Residues 249–288 enclose the LRRCT domain; sequence NPVTKHIPNYRRTVTVRLKQLTYLDDRPVFPKDRACAEAW. Residues 326–336 are compositionally biased toward basic and acidic residues; that stretch reads EERKKARDKGE. Disordered stretches follow at residues 326–360 and 399–431; these read EERK…PLGE and EEPD…TDGT. Low complexity-rich tracts occupy residues 337–351 and 415–428; these read TPLP…TSPE and VATA…VAAT. Ser-349 is subject to Phosphoserine. Residues Ser-464 and Ser-487 each carry the phosphoserine modification. Disordered regions lie at residues 480-503 and 525-622; these read ISSL…EHTP and RVPL…FGLD. Over residues 539-550 the composition is skewed to polar residues; the sequence is APETQGQVFSTT.

This sequence belongs to the DNAAF1 family.

The protein resides in the cell projection. It localises to the cilium. Functionally, cilium-specific protein required for the stability of the ciliary architecture. Plays a role in cytoplasmic preassembly of dynein arms. Involved in regulation of microtubule-based cilia and actin-based brush border microvilli. The chain is Dynein axonemal assembly factor 1 (Dnaaf1) from Peromyscus polionotus (Oldfield mouse).